The primary structure comprises 185 residues: uncharacterized protein (185 aa).

This is an uncharacterized protein from Haemophilus influenzae (strain ATCC 51907 / DSM 11121 / KW20 / Rd).